Consider the following 154-residue polypeptide: Endoribonuclease YbeY (154 aa).

H115, H119, and H125 together coordinate Zn(2+).

This sequence belongs to the endoribonuclease YbeY family. Zn(2+) is required as a cofactor.

It localises to the cytoplasm. Functionally, single strand-specific metallo-endoribonuclease involved in late-stage 70S ribosome quality control and in maturation of the 3' terminus of the 16S rRNA. This chain is Endoribonuclease YbeY, found in Halorhodospira halophila (strain DSM 244 / SL1) (Ectothiorhodospira halophila (strain DSM 244 / SL1)).